The chain runs to 79 residues: Calcium/calmodulin-dependent protein kinase II inhibitor 2 (79 aa).

The interval 1-21 (MSEILPYGEDKMGRFGADPEG) is disordered. The interval 43 to 69 (KRPPKLGQIGRAKRVVIEDDRIDDVLK) is inhibitory domain.

Belongs to the CAMK2N family. Interacts with CAMK2A and CAMK2B in the presence of Ca(2+)/calmodulin or after autophosphorylation.

The protein localises to the nucleus. It is found in the cytoplasm. It localises to the cytosol. Its subcellular location is the synapse. Functionally, potent and specific cellular inhibitor of CaM-kinase II (CAMK2). Traps Ca(2+)/calmodulin on CAMK2. This chain is Calcium/calmodulin-dependent protein kinase II inhibitor 2 (Camk2n2), found in Mus musculus (Mouse).